Consider the following 227-residue polypeptide: 2-phospho-L-lactate guanylyltransferase (227 aa).

It belongs to the CofC family. In terms of assembly, homodimer.

It catalyses the reaction (2S)-2-phospholactate + GTP + H(+) = (2S)-lactyl-2-diphospho-5'-guanosine + diphosphate. Its pathway is cofactor biosynthesis; coenzyme F420 biosynthesis. Functionally, guanylyltransferase that catalyzes the activation of (2S)-2-phospholactate (2-PL) as (2S)-lactyl-2-diphospho-5'-guanosine, via the condensation of 2-PL with GTP. It is involved in the biosynthesis of coenzyme F420, a hydride carrier cofactor. This chain is 2-phospho-L-lactate guanylyltransferase, found in Methanocaldococcus sp. (strain FS406-22).